Reading from the N-terminus, the 164-residue chain is Biotin carboxyl carrier protein of acetyl-CoA carboxylase (164 aa).

The Biotinyl-binding domain occupies 86–162; that stretch reads GDFIVSPLVG…QFGSKLFRIV (77 aa). Lys128 carries the N6-biotinyllysine modification.

As to quaternary structure, homodimer.

It functions in the pathway lipid metabolism; fatty acid biosynthesis. In terms of biological role, this protein is a component of the acetyl coenzyme A carboxylase complex; first, biotin carboxylase catalyzes the carboxylation of the carrier protein and then the transcarboxylase transfers the carboxyl group to form malonyl-CoA. The protein is Biotin carboxyl carrier protein of acetyl-CoA carboxylase (accB) of Chlamydia trachomatis serovar D (strain ATCC VR-885 / DSM 19411 / UW-3/Cx).